The primary structure comprises 1518 residues: Putative cellulose synthase 3 (1518 aa).

Positions 1 to 731 are catalytic; that stretch reads MYGTWFTTGK…EEKLEKQSFV (731 aa). A run of 3 helical transmembrane segments spans residues 24–44, 71–91, and 105–125; these read PVWV…SVRI, ITVF…VWRL, and LAVL…LSYF. The interval 144–237 is catalytic subdomain A; sequence QWPSVDVFVP…FAVIFDCDHV (94 aa). Residues Asp-186 and Asp-330 contribute to the active site. A catalytic subdomain B region spans residues 314–374; sequence EAVMGIGGFA…GQRVRWARGM (61 aa). A run of 5 helical transmembrane segments spans residues 404-424, 428-448, 465-485, 514-534, and 543-563; these read FLFA…LFLG, IAAS…HSVI, IYET…LLQP, ILAG…VWQF, and FILN…SIAV. The 100-residue stretch at 569–668 folds into the PilZ domain; the sequence is QTRNAPRVSV…ERQVVSMVFG (100 aa). The interval 732–1518 is cyclic di-GMP binding domain; that stretch reads LKPVPRSARH…IARDDLTGEL (787 aa). The segment at 765 to 785 is disordered; that stretch reads APSPDQSGVTAETPFGDSNTG. Over residues 768 to 785 the composition is skewed to polar residues; the sequence is PDQSGVTAETPFGDSNTG. A helical transmembrane segment spans residues 1481 to 1501; it reads ALYLAGLAGAGLAALGVWAWL.

In the N-terminal section; belongs to the glycosyltransferase 2 family. The protein in the C-terminal section; belongs to the AcsB/BcsB family.

The protein localises to the cell inner membrane. The enzyme catalyses [(1-&gt;4)-beta-D-glucosyl](n) + UDP-alpha-D-glucose = [(1-&gt;4)-beta-D-glucosyl](n+1) + UDP + H(+). Its pathway is glycan metabolism; bacterial cellulose biosynthesis. In Komagataeibacter xylinus (Gluconacetobacter xylinus), this protein is Putative cellulose synthase 3 (bcsABII-B).